The sequence spans 248 residues: tRNA (guanine-N(1)-)-methyltransferase (248 aa).

S-adenosyl-L-methionine is bound by residues Gly-113 and 133–138 (IGDFVL).

Belongs to the RNA methyltransferase TrmD family. In terms of assembly, homodimer.

Its subcellular location is the cytoplasm. It catalyses the reaction guanosine(37) in tRNA + S-adenosyl-L-methionine = N(1)-methylguanosine(37) in tRNA + S-adenosyl-L-homocysteine + H(+). Its function is as follows. Specifically methylates guanosine-37 in various tRNAs. The sequence is that of tRNA (guanine-N(1)-)-methyltransferase from Dehalococcoides mccartyi (strain ATCC BAA-2100 / JCM 16839 / KCTC 5957 / BAV1).